The following is a 179-amino-acid chain: Large ribosomal subunit protein uL6 (179 aa).

Belongs to the universal ribosomal protein uL6 family. As to quaternary structure, part of the 50S ribosomal subunit.

Its function is as follows. This protein binds to the 23S rRNA, and is important in its secondary structure. It is located near the subunit interface in the base of the L7/L12 stalk, and near the tRNA binding site of the peptidyltransferase center. This is Large ribosomal subunit protein uL6 from Nocardia farcinica (strain IFM 10152).